We begin with the raw amino-acid sequence, 65 residues long: Large ribosomal subunit protein bL35 (65 aa).

Residues 1–26 (MPKMKSNKGASKRFKKTASGGFKCKQ) form a disordered region.

Belongs to the bacterial ribosomal protein bL35 family.

The chain is Large ribosomal subunit protein bL35 from Idiomarina loihiensis (strain ATCC BAA-735 / DSM 15497 / L2-TR).